The following is a 307-amino-acid chain: UDP-N-acetylenolpyruvoylglucosamine reductase (307 aa).

In terms of domain architecture, FAD-binding PCMH-type spans 21 to 183; the sequence is RVGGPADLFF…TEVVMEGPPG (163 aa). The active site involves Arg163. Basic and acidic residues predominate over residues 200–209; it reads EATQPTKDRT. Residues 200-227 are disordered; sequence EATQPTKDRTAGSTFRNPAGFSSTGRAD. Positions 210 to 224 are enriched in polar residues; it reads AGSTFRNPAGFSSTG. The active-site Proton donor is the Ser212. Glu294 is an active-site residue.

It belongs to the MurB family. Requires FAD as cofactor.

The protein resides in the cytoplasm. The catalysed reaction is UDP-N-acetyl-alpha-D-muramate + NADP(+) = UDP-N-acetyl-3-O-(1-carboxyvinyl)-alpha-D-glucosamine + NADPH + H(+). It functions in the pathway cell wall biogenesis; peptidoglycan biosynthesis. Functionally, cell wall formation. This Dinoroseobacter shibae (strain DSM 16493 / NCIMB 14021 / DFL 12) protein is UDP-N-acetylenolpyruvoylglucosamine reductase.